We begin with the raw amino-acid sequence, 553 residues long: Efflux pump alnA (553 aa).

Residues 1–21 are compositionally biased toward basic and acidic residues; sequence MSSDDTVKQEHSCSADSEKQD. Residues 1–36 are disordered; the sequence is MSSDDTVKQEHSCSADSEKQDSSCASDNEQPKEPQS. The next 13 membrane-spanning stretches (helical) occupy residues 40–60, 85–105, 110–130, 136–156, 174–194, 202–222, 243–263, 270–290, 319–339, 355–375, 382–402, 413–433, and 522–542; these read IHGL…FLFA, WSGV…LQIF, IKWM…ICGA, MLIG…VGVM, AMGL…GAFT, WSFY…IFLL, LVGT…INFA, SEPG…VFGI, LLFV…YVIP, VRLL…GYLA, IPWY…MYTI, GYSS…HAVA, and TYIL…GMKW.

This sequence belongs to the major facilitator superfamily. TCR/Tet family.

The protein localises to the cell membrane. In terms of biological role, efflux pump; part of the gene cluster that mediates the biosynthesis of asperlin, a polyketide showing anti-inflammatory, antitumor and antibiotic activities. Is probably involved in the efflux of asperlin. This chain is Efflux pump alnA, found in Emericella nidulans (strain FGSC A4 / ATCC 38163 / CBS 112.46 / NRRL 194 / M139) (Aspergillus nidulans).